A 260-amino-acid polypeptide reads, in one-letter code: Small ribosomal subunit protein eS1 (260 aa).

Residue K30 is modified to N6-acetyllysine; alternate. K30 is covalently cross-linked (Glycyl lysine isopeptide (Lys-Gly) (interchain with G-Cter in SUMO2); alternate). K52 carries the post-translational modification N6-acetyllysine. The residue at position 151 (Y151) is an ADP-ribosyltyrosine. The interval H228–V260 is disordered. A phosphoserine mark is found at S232 and S233. The segment covering T238–G251 has biased composition (basic and acidic residues). N6-acetyllysine; alternate is present on K245. K245 is covalently cross-linked (Glycyl lysine isopeptide (Lys-Gly) (interchain with G-Cter in SUMO2); alternate). Position 252 is a phosphotyrosine (Y252). S259 is subject to Phosphoserine.

The protein belongs to the eukaryotic ribosomal protein eS1 family. Component of the small ribosomal subunit. Mature ribosomes consist of a small (40S) and a large (60S) subunit. The 40S subunit contains about 33 different proteins and 1 molecule of RNA (18S). The 60S subunit contains about 49 different proteins and 3 molecules of RNA (28S, 5.8S and 5S). Identified in a IGF2BP1-dependent mRNP granule complex containing untranslated mRNAs. Binds with high affinity to IPO4. Interacts with DDIT3. Part of the small subunit (SSU) processome, composed of more than 70 proteins and the RNA chaperone small nucleolar RNA (snoRNA) U3. In terms of processing, ADP-ribosylated at Tyr-151 by PARP1 in presence of HPF1.

The protein localises to the cytoplasm. It localises to the nucleus. Its subcellular location is the nucleolus. In terms of biological role, component of the small ribosomal subunit. The ribosome is a large ribonucleoprotein complex responsible for the synthesis of proteins in the cell. Part of the small subunit (SSU) processome, first precursor of the small eukaryotic ribosomal subunit. During the assembly of the SSU processome in the nucleolus, many ribosome biogenesis factors, an RNA chaperone and ribosomal proteins associate with the nascent pre-rRNA and work in concert to generate RNA folding, modifications, rearrangements and cleavage as well as targeted degradation of pre-ribosomal RNA by the RNA exosome. May play a role during erythropoiesis through regulation of transcription factor DDIT3. The sequence is that of Small ribosomal subunit protein eS1 from Felis catus (Cat).